The chain runs to 122 residues: Protein SPIRAL1-like 3 (122 aa).

Disordered regions lie at residues 1–78 and 96–122; these read MGKA…NNYF and KVHAAPGGGSSLDYLFGGPSPAGSGNK. The span at 32–61 shows a compositional bias: low complexity; sequence TMGTTTTTTTTTTTDGTGGRPITTTTTTVT. A Phosphoserine modification is found at serine 73.

This sequence belongs to the SPIRAL1 family. Ubiquitous. Preferentially expressed in above-ground organs.

Functionally, acts redundantly with SPR1 in maintaining the cortical microtubules organization essential for anisotropic cell growth. The protein is Protein SPIRAL1-like 3 (SP1L3) of Arabidopsis thaliana (Mouse-ear cress).